Here is a 149-residue protein sequence, read N- to C-terminus: Calmodulin (149 aa).

EF-hand domains are found at residues 8-43 (QQIA…LGQN), 44-79 (PSES…KMKD), 81-116 (DSEA…IGEK), and 117-149 (LSDA…LAAK). Ca(2+) contacts are provided by D21, D23, D25, K27, E32, D57, N59, D61, S63, E68, D94, N96, D98, K100, E105, D130, N132, D134, E136, and E141.

Belongs to the calmodulin family.

Calmodulin mediates the control of a large number of enzymes, ion channels and other proteins by Ca(2+). Among the enzymes to be stimulated by the calmodulin-Ca(2+) complex are a number of protein kinases and phosphatases. This Candida albicans (Yeast) protein is Calmodulin (CMD1).